We begin with the raw amino-acid sequence, 341 residues long: Ribulose-5-phosphate reductase (341 aa).

The Zn(2+) site is built by Cys38, His64, Glu65, and Glu144.

Belongs to the zinc-containing alcohol dehydrogenase family. It depends on Zn(2+) as a cofactor.

The enzyme catalyses D-ribitol 5-phosphate + NADP(+) = D-ribulose 5-phosphate + NADPH + H(+). It functions in the pathway cell wall biogenesis; poly(ribitol phosphate) teichoic acid biosynthesis. Its function is as follows. Catalyzes the NADPH dependent reduction of D-ribulose 5-phosphate to D-ribitol 5-phosphate. In Bacillus spizizenii (strain ATCC 23059 / NRRL B-14472 / W23) (Bacillus subtilis subsp. spizizenii), this protein is Ribulose-5-phosphate reductase.